Reading from the N-terminus, the 433-residue chain is Nuclear hormone receptor family member nhr-98 (433 aa).

The segment at residues 41-116 (SKKCQICENP…FGMTIDNFQF (76 aa)) is a DNA-binding region (nuclear receptor). 2 NR C4-type zinc fingers span residues 44 to 64 (CQICENPAHGKHFGAVTCRAC) and 80 to 104 (CKTENKCSFRKNGYFSCKKCRMQRC). The region spanning 177-433 (ETPYQVSNVL…CSHPGIFLNA (257 aa)) is the NR LBD domain.

This sequence belongs to the nuclear hormone receptor family.

It localises to the nucleus. Orphan nuclear receptor. The protein is Nuclear hormone receptor family member nhr-98 (nhr-98) of Caenorhabditis elegans.